We begin with the raw amino-acid sequence, 150 residues long: Flagellar assembly factor FliW (150 aa).

It belongs to the FliW family. As to quaternary structure, interacts with translational regulator CsrA. Interacts with flagellins FlaB1, FlaB2 and FlaB3.

The protein resides in the cytoplasm. Its function is as follows. Acts as an anti-CsrA protein, binds CsrA and prevents it from repressing translation of its target genes, one of which is flagellin. Binds to flagellin and participates in the assembly of the flagellum. Binds to the C-terminal region of flagellin, which is implicated in polymerization, and participates in the assembly of the flagellum. The chain is Flagellar assembly factor FliW from Treponema pallidum (strain Nichols).